The sequence spans 922 residues: Putative ATP-dependent helicase/translocase YwqA (922 aa).

Residues 462-625 (LFLRESGFGA…WSIFDFMNKG (164 aa)) form the Helicase ATP-binding domain. Position 475 to 482 (475 to 482 (DDMGLGKT)) interacts with ATP. The short motif at 576–579 (DEAQ) is the DEAQ box element. One can recognise a Helicase C-terminal domain in the interval 753-907 (KLLELMTAIR…QSENWITELS (155 aa)).

This sequence belongs to the SNF2/RAD54 helicase family. As to quaternary structure, interacts with the RNA polymerase core.

This chain is Putative ATP-dependent helicase/translocase YwqA (ywqA), found in Bacillus subtilis (strain 168).